The sequence spans 309 residues: Aspartate carbamoyltransferase catalytic subunit (309 aa).

Carbamoyl phosphate-binding residues include arginine 58 and threonine 59. Lysine 86 is an L-aspartate binding site. 3 residues coordinate carbamoyl phosphate: arginine 108, histidine 136, and glutamine 139. L-aspartate is bound by residues arginine 170 and arginine 224. Carbamoyl phosphate is bound by residues glycine 266 and proline 267.

The protein belongs to the aspartate/ornithine carbamoyltransferase superfamily. ATCase family. As to quaternary structure, heterododecamer (2C3:3R2) of six catalytic PyrB chains organized as two trimers (C3), and six regulatory PyrI chains organized as three dimers (R2).

The catalysed reaction is carbamoyl phosphate + L-aspartate = N-carbamoyl-L-aspartate + phosphate + H(+). The protein operates within pyrimidine metabolism; UMP biosynthesis via de novo pathway; (S)-dihydroorotate from bicarbonate: step 2/3. In terms of biological role, catalyzes the condensation of carbamoyl phosphate and aspartate to form carbamoyl aspartate and inorganic phosphate, the committed step in the de novo pyrimidine nucleotide biosynthesis pathway. In Campylobacter curvus (strain 525.92), this protein is Aspartate carbamoyltransferase catalytic subunit.